Consider the following 344-residue polypeptide: Centromere protein L (344 aa).

The residue at position 39 (Ser39) is a Phosphoserine. Phosphothreonine is present on Thr43. Ser53 carries the post-translational modification Phosphoserine.

The protein belongs to the CENP-L/IML3 family. Component of the CENPA-CAD complex, composed of CENPI, CENPK, CENPL, CENPO, CENPP, CENPQ, CENPR and CENPS. The CENPA-CAD complex interacts with the CENPA-NAC complex, at least composed of CENPA, CENPC, CENPH, CENPM, CENPN, CENPT and CENPU.

Its subcellular location is the nucleus. The protein resides in the chromosome. It is found in the centromere. Component of the CENPA-CAD (nucleosome distal) complex, a complex recruited to centromeres which is involved in assembly of kinetochore proteins, mitotic progression and chromosome segregation. May be involved in incorporation of newly synthesized CENPA into centromeres via its interaction with the CENPA-NAC complex. The chain is Centromere protein L (CENPL) from Homo sapiens (Human).